Here is a 199-residue protein sequence, read N- to C-terminus: Translation initiation factor IF-3 (199 aa).

This sequence belongs to the IF-3 family. In terms of assembly, monomer.

It is found in the cytoplasm. In terms of biological role, IF-3 binds to the 30S ribosomal subunit and shifts the equilibrium between 70S ribosomes and their 50S and 30S subunits in favor of the free subunits, thus enhancing the availability of 30S subunits on which protein synthesis initiation begins. This Gloeobacter violaceus (strain ATCC 29082 / PCC 7421) protein is Translation initiation factor IF-3.